Consider the following 436-residue polypeptide: Ribulose bisphosphate carboxylase large chain (436 aa).

Substrate-binding residues include asparagine 104 and threonine 154. The Proton acceptor role is filled by lysine 156. Residue lysine 158 participates in substrate binding. The Mg(2+) site is built by lysine 182, aspartate 184, and glutamate 185. Lysine 182 is subject to N6-carboxylysine. Residue histidine 275 is the Proton acceptor of the active site. Positions 276, 308, and 360 each coordinate substrate.

This sequence belongs to the RuBisCO large chain family. Type I subfamily. Heterohexadecamer of 8 large chains and 8 small chains. Mg(2+) is required as a cofactor.

It is found in the plastid. The protein resides in the chloroplast. It catalyses the reaction 2 (2R)-3-phosphoglycerate + 2 H(+) = D-ribulose 1,5-bisphosphate + CO2 + H2O. It carries out the reaction D-ribulose 1,5-bisphosphate + O2 = 2-phosphoglycolate + (2R)-3-phosphoglycerate + 2 H(+). Functionally, ruBisCO catalyzes two reactions: the carboxylation of D-ribulose 1,5-bisphosphate, the primary event in carbon dioxide fixation, as well as the oxidative fragmentation of the pentose substrate in the photorespiration process. Both reactions occur simultaneously and in competition at the same active site. The chain is Ribulose bisphosphate carboxylase large chain from Euglena stellata.